The sequence spans 278 residues: ATP synthase subunit delta (278 aa).

This sequence belongs to the ATPase delta chain family. As to quaternary structure, F-type ATPases have 2 components, F(1) - the catalytic core - and F(0) - the membrane proton channel. F(1) has five subunits: alpha(3), beta(3), gamma(1), delta(1), epsilon(1). F(0) has three main subunits: a(1), b(2) and c(10-14). The alpha and beta chains form an alternating ring which encloses part of the gamma chain. F(1) is attached to F(0) by a central stalk formed by the gamma and epsilon chains, while a peripheral stalk is formed by the delta and b chains.

Its subcellular location is the cell membrane. In terms of biological role, f(1)F(0) ATP synthase produces ATP from ADP in the presence of a proton or sodium gradient. F-type ATPases consist of two structural domains, F(1) containing the extramembraneous catalytic core and F(0) containing the membrane proton channel, linked together by a central stalk and a peripheral stalk. During catalysis, ATP synthesis in the catalytic domain of F(1) is coupled via a rotary mechanism of the central stalk subunits to proton translocation. This protein is part of the stalk that links CF(0) to CF(1). It either transmits conformational changes from CF(0) to CF(1) or is implicated in proton conduction. In Bifidobacterium longum (strain DJO10A), this protein is ATP synthase subunit delta.